We begin with the raw amino-acid sequence, 294 residues long: tRNA dimethylallyltransferase (294 aa).

10–17 (GPTAVGKT) contacts ATP. 12–17 (TAVGKT) contacts substrate. The segment at 35 to 38 (DSQQ) is interaction with substrate tRNA.

This sequence belongs to the IPP transferase family. Monomer. The cofactor is Mg(2+).

It catalyses the reaction adenosine(37) in tRNA + dimethylallyl diphosphate = N(6)-dimethylallyladenosine(37) in tRNA + diphosphate. In terms of biological role, catalyzes the transfer of a dimethylallyl group onto the adenine at position 37 in tRNAs that read codons beginning with uridine, leading to the formation of N6-(dimethylallyl)adenosine (i(6)A). This Streptococcus pneumoniae serotype 4 (strain ATCC BAA-334 / TIGR4) protein is tRNA dimethylallyltransferase.